The primary structure comprises 407 residues: Phosphopentomutase (407 aa).

Mn(2+) contacts are provided by aspartate 10, aspartate 306, histidine 311, aspartate 347, histidine 348, and histidine 359.

Belongs to the phosphopentomutase family. The cofactor is Mn(2+).

The protein localises to the cytoplasm. It catalyses the reaction 2-deoxy-alpha-D-ribose 1-phosphate = 2-deoxy-D-ribose 5-phosphate. It carries out the reaction alpha-D-ribose 1-phosphate = D-ribose 5-phosphate. It participates in carbohydrate degradation; 2-deoxy-D-ribose 1-phosphate degradation; D-glyceraldehyde 3-phosphate and acetaldehyde from 2-deoxy-alpha-D-ribose 1-phosphate: step 1/2. Functionally, isomerase that catalyzes the conversion of deoxy-ribose 1-phosphate (dRib-1-P) and ribose 1-phosphate (Rib-1-P) to deoxy-ribose 5-phosphate (dRib-5-P) and ribose 5-phosphate (Rib-5-P), respectively. This Pectobacterium carotovorum subsp. carotovorum (strain PC1) protein is Phosphopentomutase.